A 258-amino-acid chain; its full sequence is Imidazole glycerol phosphate synthase subunit HisF (258 aa).

Residues aspartate 11 and aspartate 130 contribute to the active site.

Belongs to the HisA/HisF family. Heterodimer of HisH and HisF.

The protein resides in the cytoplasm. It catalyses the reaction 5-[(5-phospho-1-deoxy-D-ribulos-1-ylimino)methylamino]-1-(5-phospho-beta-D-ribosyl)imidazole-4-carboxamide + L-glutamine = D-erythro-1-(imidazol-4-yl)glycerol 3-phosphate + 5-amino-1-(5-phospho-beta-D-ribosyl)imidazole-4-carboxamide + L-glutamate + H(+). It functions in the pathway amino-acid biosynthesis; L-histidine biosynthesis; L-histidine from 5-phospho-alpha-D-ribose 1-diphosphate: step 5/9. Its function is as follows. IGPS catalyzes the conversion of PRFAR and glutamine to IGP, AICAR and glutamate. The HisF subunit catalyzes the cyclization activity that produces IGP and AICAR from PRFAR using the ammonia provided by the HisH subunit. The chain is Imidazole glycerol phosphate synthase subunit HisF from Escherichia coli O7:K1 (strain IAI39 / ExPEC).